A 492-amino-acid polypeptide reads, in one-letter code: Glutamyl-tRNA(Gln) amidotransferase subunit A (492 aa).

Active-site charge relay system residues include Lys-81 and Ser-156. The active-site Acyl-ester intermediate is Ser-180.

It belongs to the amidase family. GatA subfamily. As to quaternary structure, heterotrimer of A, B and C subunits.

It carries out the reaction L-glutamyl-tRNA(Gln) + L-glutamine + ATP + H2O = L-glutaminyl-tRNA(Gln) + L-glutamate + ADP + phosphate + H(+). Its function is as follows. Allows the formation of correctly charged Gln-tRNA(Gln) through the transamidation of misacylated Glu-tRNA(Gln) in organisms which lack glutaminyl-tRNA synthetase. The reaction takes place in the presence of glutamine and ATP through an activated gamma-phospho-Glu-tRNA(Gln). The protein is Glutamyl-tRNA(Gln) amidotransferase subunit A of Rhodococcus erythropolis (strain PR4 / NBRC 100887).